The chain runs to 1149 residues: Probable phospholipid-transporting ATPase IA (1149 aa).

Residues 1-65 (MPTMRRTVSE…TAKYNIITFL (65 aa)) lie on the Cytoplasmic side of the membrane. Serine 25 is subject to Phosphoserine. Threonine 28 carries the post-translational modification Phosphothreonine. Serine 29 carries the post-translational modification Phosphoserine. The chain crosses the membrane as a helical span at residues 66 to 86 (PRFLYSQFRRAANSFFLFIAL). Residues 87-92 (LQQIPD) are Extracellular-facing. The chain crosses the membrane as a helical span at residues 93–115 (VSPTGRYTTLVPLLFILAVAAIK). The Cytoplasmic segment spans residues 116–297 (EIIEDIKRHK…SNVERITNVQ (182 aa)). The chain crosses the membrane as a helical span at residues 298 to 319 (ILILFCILIAMSLVCSVGSAIW). Residues 320–344 (NRRHSGRDWYLNLNYGGANNFGLNF) are Extracellular-facing. A helical transmembrane segment spans residues 345 to 366 (LTFIILFNNLIPISLLVTLEVV). Over 367-842 (KFTQAYFINW…GAWNYNRGSK (476 aa)) the chain is Cytoplasmic. Aspartate 409 (4-aspartylphosphate intermediate) is an active-site residue. Residues aspartate 409, lysine 410, threonine 411, glutamate 493, phenylalanine 534, lysine 557, arginine 590, threonine 670, glycine 671, aspartate 672, 726–733 (ALIIDGKT), arginine 760, and lysine 766 contribute to the ATP site. Aspartate 409 provides a ligand contact to Mg(2+). A Mg(2+)-binding site is contributed by threonine 411. Mg(2+) is bound at residue aspartate 786. ATP-binding residues include asparagine 789 and aspartate 790. Position 790 (aspartate 790) interacts with Mg(2+). The chain crosses the membrane as a helical span at residues 843-863 (CILYCFYKNIVLYIIEIWFAF). The Extracellular segment spans residues 864-875 (VNGFSGQILFER). The chain crosses the membrane as a helical span at residues 876–895 (WCIGLYNVMFTAMPPLTLGI). The Cytoplasmic portion of the chain corresponds to 896-925 (FERSCRKEYMLKYPELYKTSQNALDFNTKV). A helical membrane pass occupies residues 926 to 947 (FWVHCLNGLFHSVILFWFPLKA). The Extracellular segment spans residues 948–961 (LQYGTVFENGRTSD). The helical transmembrane segment at 962–984 (YLLLGNFVYTFVVITVCLKAGLE) threads the bilayer. The Cytoplasmic portion of the chain corresponds to 985–990 (TSYWTW). Residues 991 to 1011 (FSHIAIWGSIALWVVFFGIYS) traverse the membrane as a helical segment. Residues 1012-1029 (SLWPAVPMAPDMSGEAAM) are Extracellular-facing. Residues 1030 to 1055 (LFSSGVFWMGLLFIPVASLLLDVVYK) traverse the membrane as a helical segment. The Cytoplasmic portion of the chain corresponds to 1056-1149 (VIKRTAFKTL…DTTKQRPDEW (94 aa)). ATP is bound at residue 1080–1087 (GAVVLGKS). Position 1111 is a phosphoserine (serine 1111).

This sequence belongs to the cation transport ATPase (P-type) (TC 3.A.3) family. Type IV subfamily. As to quaternary structure, component of a P4-ATPase flippase complex which consists of a catalytic alpha subunit and an accessory beta subunit. Interacts with TMEM30A to form a flippase complex; this complex forms an intermediate phosphoenzyme. Interacts with TMEM30B; this interaction is reported conflictingly. Mg(2+) is required as a cofactor. In terms of processing, cleaved by calpain in a caspase- and calcium influx-dependent manner during platelet apoptosis leading to a 100 kDa polypeptide. As to expression, kidney.

The protein localises to the cytoplasmic vesicle. Its subcellular location is the secretory vesicle. It is found in the chromaffin granule membrane. The protein resides in the cytoplasmic granule. It localises to the cell membrane. The protein localises to the endoplasmic reticulum. Its subcellular location is the golgi apparatus. The catalysed reaction is ATP + H2O + phospholipidSide 1 = ADP + phosphate + phospholipidSide 2.. The enzyme catalyses a 1,2-diacyl-sn-glycero-3-phospho-L-serine(out) + ATP + H2O = a 1,2-diacyl-sn-glycero-3-phospho-L-serine(in) + ADP + phosphate + H(+). Functionally, catalytic component of a P4-ATPase flippase complex which catalyzes the hydrolysis of ATP coupled to the transport of aminophospholipids from the outer to the inner leaflet of various membranes and ensures the maintenance of asymmetric distribution of phospholipids. Phospholipid translocation also seems to be implicated in vesicle formation and in uptake of lipid signaling molecules. In vitro, its ATPase activity is selectively and stereospecifically stimulated by phosphatidylserine (PS). The flippase complex ATP8A1:TMEM30A seems to play a role in regulation of cell migration probably involving flippase-mediated translocation of phosphatidylethanolamine (PE) at the cell membrane. Acts as aminophospholipid translocase at the cell membrane in neuronal cells. This is Probable phospholipid-transporting ATPase IA from Bos taurus (Bovine).